A 332-amino-acid chain; its full sequence is Methionine import ATP-binding protein MetN (332 aa).

Positions 2-241 (IELKGLTKVF…PGSRLRELFY (240 aa)) constitute an ABC transporter domain. Residue 38–45 (GQSGAGKS) participates in ATP binding.

This sequence belongs to the ABC transporter superfamily. Methionine importer (TC 3.A.1.24) family. The complex is composed of two ATP-binding proteins (MetN), two transmembrane proteins (MetI) and a solute-binding protein (MetQ).

The protein resides in the cell membrane. The enzyme catalyses L-methionine(out) + ATP + H2O = L-methionine(in) + ADP + phosphate + H(+). The catalysed reaction is D-methionine(out) + ATP + H2O = D-methionine(in) + ADP + phosphate + H(+). In terms of biological role, part of the ABC transporter complex MetNIQ involved in methionine import. Responsible for energy coupling to the transport system. The polypeptide is Methionine import ATP-binding protein MetN (Symbiobacterium thermophilum (strain DSM 24528 / JCM 14929 / IAM 14863 / T)).